Consider the following 236-residue polypeptide: Small ribosomal subunit protein uS2c (236 aa).

It belongs to the universal ribosomal protein uS2 family.

It localises to the plastid. The protein localises to the chloroplast. The sequence is that of Small ribosomal subunit protein uS2c (rps2) from Agrostis stolonifera (Creeping bentgrass).